The chain runs to 429 residues: Probable M18 family aminopeptidase 2 (429 aa).

3 residues coordinate Zn(2+): His82, His156, and His401.

The protein belongs to the peptidase M18 family. Requires Zn(2+) as cofactor.

The chain is Probable M18 family aminopeptidase 2 from Azotobacter vinelandii (strain DJ / ATCC BAA-1303).